The chain runs to 499 residues: Glucose-6-phosphate exchanger SLC37A2 (499 aa).

A helical transmembrane segment spans residues Tyr-21 to Arg-40. 3 N-linked (GlcNAc...) asparagine glycosylation sites follow: Asn-53, Asn-62, and Asn-66. 11 consecutive transmembrane segments (helical) span residues Gly-86–Phe-106, Leu-116–Trp-136, Tyr-143–Val-163, Ala-187–Leu-207, Ser-208–Val-228, Leu-302–Ile-322, Gly-334–Ile-354, Ala-362–Phe-382, Ile-391–Ala-411, Ala-434–Leu-454, and Gly-458–Ala-478.

Belongs to the major facilitator superfamily. Organophosphate:Pi antiporter (OPA) (TC 2.A.1.4) family.

It localises to the endoplasmic reticulum membrane. It carries out the reaction D-glucose 6-phosphate(in) + phosphate(out) = D-glucose 6-phosphate(out) + phosphate(in). Inorganic phosphate and glucose-6-phosphate antiporter. May transport cytoplasmic glucose-6-phosphate into the lumen of the endoplasmic reticulum and translocate inorganic phosphate into the opposite direction. The sequence is that of Glucose-6-phosphate exchanger SLC37A2 from Xenopus laevis (African clawed frog).